Consider the following 219-residue polypeptide: UPF0173 metal-dependent hydrolase Mhun_1705 (219 aa).

Belongs to the UPF0173 family.

The polypeptide is UPF0173 metal-dependent hydrolase Mhun_1705 (Methanospirillum hungatei JF-1 (strain ATCC 27890 / DSM 864 / NBRC 100397 / JF-1)).